A 46-amino-acid polypeptide reads, in one-letter code: Protein YpdJ (46 aa).

May be involved in H(2) production during fermentative growth. This is Protein YpdJ (ypdJ) from Escherichia coli (strain K12).